We begin with the raw amino-acid sequence, 810 residues long: Phenylalanine--tRNA ligase beta subunit (810 aa).

Residues 39–150 form the tRNA-binding domain; that stretch reads RSWAAGVVLG…LDLPSGSPVG (112 aa). The B5 domain occupies 407–495; that stretch reads RGEAIINLRL…RLYGYDHFCE (89 aa). Mg(2+)-binding residues include Asp473, Asp479, Glu482, and Glu483. Positions 716 to 809 constitute an FDX-ACB domain; the sequence is SPYPAVARDL…LTKQFAVSLR (94 aa).

This sequence belongs to the phenylalanyl-tRNA synthetase beta subunit family. Type 1 subfamily. In terms of assembly, tetramer of two alpha and two beta subunits. Mg(2+) serves as cofactor.

Its subcellular location is the cytoplasm. It carries out the reaction tRNA(Phe) + L-phenylalanine + ATP = L-phenylalanyl-tRNA(Phe) + AMP + diphosphate + H(+). The chain is Phenylalanine--tRNA ligase beta subunit (pheT) from Synechocystis sp. (strain ATCC 27184 / PCC 6803 / Kazusa).